A 298-amino-acid polypeptide reads, in one-letter code: MSNRKDLLSVLDFTVNDVGNIIELAGQYLENKAANGRILENKTVINLFFEDSTRTLTSFEMAAKSLGANVVTLPVKSSSINKGEDLTDMIKTLNAMNPDYIVVRQKSSGIVNMLAKHVSCLLINAGDGSSEHPTQALADYFVISSHKKQIKNLKIVICGDILHSRVARSNIRLLKMFGAKICLVAPPTLICKHFPEVDSIYYSLIEGIKDADVIMLLRLQKERMNSGCFIPSNREYFYLYGLDSQKLLCAKSNAIVMHPGPINRGIEISSDITDHIILQQVEFGLAIRKAVLHYYRPC.

Carbamoyl phosphate contacts are provided by arginine 54 and threonine 55. Lysine 82 serves as a coordination point for L-aspartate. Residues arginine 104, histidine 132, and glutamine 135 each coordinate carbamoyl phosphate. Arginine 165 and arginine 218 together coordinate L-aspartate. Glycine 260 and proline 261 together coordinate carbamoyl phosphate.

Belongs to the aspartate/ornithine carbamoyltransferase superfamily. ATCase family. Heterododecamer (2C3:3R2) of six catalytic PyrB chains organized as two trimers (C3), and six regulatory PyrI chains organized as three dimers (R2).

The catalysed reaction is carbamoyl phosphate + L-aspartate = N-carbamoyl-L-aspartate + phosphate + H(+). It functions in the pathway pyrimidine metabolism; UMP biosynthesis via de novo pathway; (S)-dihydroorotate from bicarbonate: step 2/3. Its function is as follows. Catalyzes the condensation of carbamoyl phosphate and aspartate to form carbamoyl aspartate and inorganic phosphate, the committed step in the de novo pyrimidine nucleotide biosynthesis pathway. This chain is Aspartate carbamoyltransferase catalytic subunit, found in Wolbachia sp. subsp. Brugia malayi (strain TRS).